A 449-amino-acid chain; its full sequence is Rubisco accumulation factor 1.2, chloroplastic (449 aa).

Residues 1–61 (MFSLKSLISS…NMIPKNPPAR (61 aa)) constitute a chloroplast transit peptide. Residues 75 to 264 (IPTQFRSLDS…KAKNRLNTEL (190 aa)) are N-terminal alpha-helix. A coiled-coil region spans residues 262-288 (TELYGDKEAEKEKEKKKKEEEVKAIRI). The tract at residues 288–434 (IPVVRLKFGE…GMVVLVVRPP (147 aa)) is C-terminal beta sheet.

The protein belongs to the RAF family. Homodimer.

It localises to the plastid. The protein localises to the chloroplast. Functionally, required for assembly or stability of RuBisCO. Acts at a postchaperonin step to fold and/or assemble the large subunit (rbcL) into RuBisCO. RAF1 brackets an rbcL dimer (rbcL(2)), leading to rbcL(8)-RAF1(4) complex formation. In the next step, RBCS displaces RAF1, thus resulting in holoenzyme formation. The protein is Rubisco accumulation factor 1.2, chloroplastic of Arabidopsis thaliana (Mouse-ear cress).